A 274-amino-acid polypeptide reads, in one-letter code: Large ribosomal subunit protein uL2 (274 aa).

Disordered regions lie at residues A28–I54 and V224–K274. Over residues K263 to K274 the composition is skewed to basic and acidic residues.

Belongs to the universal ribosomal protein uL2 family. Part of the 50S ribosomal subunit. Forms a bridge to the 30S subunit in the 70S ribosome.

Functionally, one of the primary rRNA binding proteins. Required for association of the 30S and 50S subunits to form the 70S ribosome, for tRNA binding and peptide bond formation. It has been suggested to have peptidyltransferase activity; this is somewhat controversial. Makes several contacts with the 16S rRNA in the 70S ribosome. The protein is Large ribosomal subunit protein uL2 of Pseudomonas savastanoi pv. phaseolicola (strain 1448A / Race 6) (Pseudomonas syringae pv. phaseolicola (strain 1448A / Race 6)).